The following is an 811-amino-acid chain: Endothelin-converting enzyme 2 (811 aa).

Topologically, residues 1–106 (MNVALQELGA…QLLGSRTQLE (106 aa)) are cytoplasmic. The disordered stretch occupies residues 22–64 (LRDEDAPETPVEGGASPDAMEVGKGASPFSPGPSPGMTPGTPR). A helical; Signal-anchor for type II membrane protein membrane pass occupies residues 107–127 (LVLAGASLLLAALLLGCLVAL). The Lumenal portion of the chain corresponds to 128–811 (GVQYHRDPSH…MNPGQLCEVW (684 aa)). The Peptidase M13 domain maps to 139–811 (TCLTEACIRV…MNPGQLCEVW (673 aa)). Cystine bridges form between C140–C145, C163–C796, C171–C756, C227–C476, and C685–C808. N-linked (GlcNAc...) asparagine glycans are attached at residues N207, N211, N252, N312, N357, N424, and N580. H648 is a binding site for Zn(2+). E649 is an active-site residue. Residue H652 coordinates Zn(2+). Residues N673 and N681 are each glycosylated (N-linked (GlcNAc...) asparagine). E708 lines the Zn(2+) pocket. The active-site Proton donor is D712.

Belongs to the peptidase M13 family. Requires Zn(2+) as cofactor.

Its subcellular location is the golgi apparatus membrane. It is found in the cytoplasmic vesicle. The protein resides in the secretory vesicle membrane. The enzyme catalyses Hydrolysis of the 21-Trp-|-Val-22 bond in big endothelin to form endothelin 1.. Converts big endothelin-1 to endothelin-1. Also involved in the processing of various neuroendocrine peptides, including neurotensin, angiotensin I, substance P, proenkephalin-derived peptides, and prodynorphin-derived peptides. May play a role in amyloid-beta processing. The chain is Endothelin-converting enzyme 2 from Homo sapiens (Human).